The chain runs to 283 residues: CASP-like protein 4A3 (283 aa).

The segment at 1-86 (MRSPAKTMPS…VEETPSPIVV (86 aa)) is disordered. Residues 1–135 (MRSPAKTMPS…SRREEVVKFS (135 aa)) are Cytoplasmic-facing. Residues 9-20 (PSMSPSSVSTEK) are compositionally biased toward low complexity. The span at 50–79 (SLDHSSESEKEDAKSKPESRRNKNPGKVEE) shows a compositional bias: basic and acidic residues. The helical transmembrane segment at 136-156 (ALGFRLSEVVLALISFSIMAA) threads the bilayer. Topologically, residues 157-174 (DKTKGWSGDSFDRYKEYR) are extracellular. The helical transmembrane segment at 175–195 (FCLSVNVVAFVYSSFQACDLA) threads the bilayer. The Cytoplasmic segment spans residues 196–212 (YHLVKEKHLISHHLRPL). Residues 213-233 (FEFIIDQVLAYLLMSASTAAV) traverse the membrane as a helical segment. Over 234–251 (TRVDDWVSNWGKDEFTEM) the chain is Extracellular. The chain crosses the membrane as a helical span at residues 252-272 (ASASIAMSFLAFLAFAFSSLI). The Cytoplasmic portion of the chain corresponds to 273–283 (SGYNLFNQGSL).

This sequence belongs to the Casparian strip membrane proteins (CASP) family. As to quaternary structure, homodimer and heterodimers.

The protein localises to the cell membrane. The polypeptide is CASP-like protein 4A3 (Arabidopsis thaliana (Mouse-ear cress)).